Reading from the N-terminus, the 103-residue chain is Cell division protein FtsB (103 aa).

Residues 1 to 3 (MGK) lie on the Cytoplasmic side of the membrane. Residues 4-21 (LTLLLLALLVWLQYSLWF) form a helical membrane-spanning segment. The Periplasmic portion of the chain corresponds to 22–103 (GKNGIHDYSR…RAQTAGQNNR (82 aa)). Residues 33–62 (NDDVVAQQATNAKLKARNDQLFAEIDDLNG) are a coiled coil.

The protein belongs to the FtsB family. Part of a complex composed of FtsB, FtsL and FtsQ.

It is found in the cell inner membrane. Essential cell division protein. May link together the upstream cell division proteins, which are predominantly cytoplasmic, with the downstream cell division proteins, which are predominantly periplasmic. The sequence is that of Cell division protein FtsB from Salmonella arizonae (strain ATCC BAA-731 / CDC346-86 / RSK2980).